Consider the following 468-residue polypeptide: Probable citrate synthase, mitochondrial (468 aa).

Active-site residues include His303, His349, and Asp404.

Belongs to the citrate synthase family. In terms of assembly, homodimer.

It localises to the mitochondrion matrix. The enzyme catalyses oxaloacetate + acetyl-CoA + H2O = citrate + CoA + H(+). It participates in carbohydrate metabolism; tricarboxylic acid cycle; isocitrate from oxaloacetate: step 1/2. This Caenorhabditis elegans protein is Probable citrate synthase, mitochondrial (cts-1).